Consider the following 245-residue polypeptide: Adenosylcobinamide-GDP ribazoletransferase (245 aa).

5 helical membrane passes run 31 to 51 (FGRAVLCYPLVGVLIGVVLYA), 61 to 81 (PLLQAALLLSLWVALSGALHL), 113 to 133 (VAVVVLVLVLLLKFSALAALL), 138 to 158 (AGLLPLAPWLARSSLPLLFLT), and 192 to 212 (LAFGLAGLLALLVTLMLFAWL).

The protein belongs to the CobS family. The cofactor is Mg(2+).

It is found in the cell inner membrane. It carries out the reaction alpha-ribazole + adenosylcob(III)inamide-GDP = adenosylcob(III)alamin + GMP + H(+). It catalyses the reaction alpha-ribazole 5'-phosphate + adenosylcob(III)inamide-GDP = adenosylcob(III)alamin 5'-phosphate + GMP + H(+). It functions in the pathway cofactor biosynthesis; adenosylcobalamin biosynthesis; adenosylcobalamin from cob(II)yrinate a,c-diamide: step 7/7. In terms of biological role, joins adenosylcobinamide-GDP and alpha-ribazole to generate adenosylcobalamin (Ado-cobalamin). Also synthesizes adenosylcobalamin 5'-phosphate from adenosylcobinamide-GDP and alpha-ribazole 5'-phosphate. The sequence is that of Adenosylcobinamide-GDP ribazoletransferase from Pseudomonas aeruginosa (strain UCBPP-PA14).